The primary structure comprises 701 residues: MRTGASFEVISPHDPAGDQPAAINELERRIRAGERDVVLLGATGTGKSATTAWLIERLQRPTLVMAPNKTLAAQLANELREMLPHNAVEYFVSYYDYYQPEAYIAQTDTYIEKDSSINDDVERLRHSATSALLSRRDVVVVASVSCIYGLGTPQSYLDRSVELQVGTDVPRDGLLRLLVDVQYTRNDLSFTRGSFRVRGDTVEIIPSYEDLAVRIEFFGDGIEALYYLHPLTGDVVRQVDSLRIFPATHYVAGPERMAQAISTIEEELAERLAELEGHGKLLEAHRLRMRTNYDIEMMRQVGFCSGIENYSRHIDGRPAGSAPATLLDYFPEDFLLVIDESHVTVPQIGGMYEGDISRKRNLVEFGFRLPSAVDNRPLQWEEFADRIGQTVYLSATPGPYELSQSGGEFVEQVIRPTGLVDPKVVVKPTKGQIDDLIGEIRQRAEVDQRVLVTTLTKKMAEDLTDYLLEMGIRVRYLHSEVDTLRRVELLRQLRLGEYDVLVGINLLREGLDLPEVSLVAILDADKEGFLRSARSLIQTIGRAARNVSGEVHMYADKITDSMKEAIDETERRRAKQVAYNEANGIDPQPLRKKIADILDQVYREADDTEAAESVPIGGSGRNSSRGRRAQGEPGRAVSAGVFEGRDTSTMPRAELADLIKDLTSQMMVAARDLQFELAARFRDEIADLKKELRGMDAAGLN.

Residues 28 to 188 (RRIRAGERDV…VDVQYTRNDL (161 aa)) form the Helicase ATP-binding domain. Residue 41–48 (GATGTGKS) coordinates ATP. Residues 94 to 117 (YYDYYQPEAYIAQTDTYIEKDSSI) carry the Beta-hairpin motif. Residues 432–598 (QIDDLIGEIR…PLRKKIADIL (167 aa)) enclose the Helicase C-terminal domain. The disordered stretch occupies residues 606 to 636 (DDTEAAESVPIGGSGRNSSRGRRAQGEPGRA). The 36-residue stretch at 656 to 691 (ADLIKDLTSQMMVAARDLQFELAARFRDEIADLKKE) folds into the UVR domain.

This sequence belongs to the UvrB family. In terms of assembly, forms a heterotetramer with UvrA during the search for lesions. Interacts with UvrC in an incision complex.

It is found in the cytoplasm. In terms of biological role, the UvrABC repair system catalyzes the recognition and processing of DNA lesions. A damage recognition complex composed of 2 UvrA and 2 UvrB subunits scans DNA for abnormalities. Upon binding of the UvrA(2)B(2) complex to a putative damaged site, the DNA wraps around one UvrB monomer. DNA wrap is dependent on ATP binding by UvrB and probably causes local melting of the DNA helix, facilitating insertion of UvrB beta-hairpin between the DNA strands. Then UvrB probes one DNA strand for the presence of a lesion. If a lesion is found the UvrA subunits dissociate and the UvrB-DNA preincision complex is formed. This complex is subsequently bound by UvrC and the second UvrB is released. If no lesion is found, the DNA wraps around the other UvrB subunit that will check the other stand for damage. The protein is UvrABC system protein B of Mycobacterium ulcerans (strain Agy99).